A 454-amino-acid chain; its full sequence is Ribosomal protein uS12 methylthiotransferase RimO (454 aa).

Positions 19-129 (AKVGFVSLGC…VLAQVHEHVA (111 aa)) constitute an MTTase N-terminal domain. Residues Cys-28, Cys-64, Cys-93, Cys-161, Cys-165, and Cys-168 each coordinate [4Fe-4S] cluster. In terms of domain architecture, Radical SAM core spans 147-384 (LTPKHYAYLK…MAVQAKISSD (238 aa)). Positions 387–453 (QVRIGQEYLI…EHDVWGVRVE (67 aa)) constitute a TRAM domain.

This sequence belongs to the methylthiotransferase family. RimO subfamily. The cofactor is [4Fe-4S] cluster.

Its subcellular location is the cytoplasm. The catalysed reaction is L-aspartate(89)-[ribosomal protein uS12]-hydrogen + (sulfur carrier)-SH + AH2 + 2 S-adenosyl-L-methionine = 3-methylsulfanyl-L-aspartate(89)-[ribosomal protein uS12]-hydrogen + (sulfur carrier)-H + 5'-deoxyadenosine + L-methionine + A + S-adenosyl-L-homocysteine + 2 H(+). Catalyzes the methylthiolation of an aspartic acid residue of ribosomal protein uS12. This Colwellia psychrerythraea (strain 34H / ATCC BAA-681) (Vibrio psychroerythus) protein is Ribosomal protein uS12 methylthiotransferase RimO.